The sequence spans 449 residues: Exodeoxyribonuclease 7 large subunit (449 aa).

Belongs to the XseA family. Heterooligomer composed of large and small subunits.

It localises to the cytoplasm. The catalysed reaction is Exonucleolytic cleavage in either 5'- to 3'- or 3'- to 5'-direction to yield nucleoside 5'-phosphates.. Its function is as follows. Bidirectionally degrades single-stranded DNA into large acid-insoluble oligonucleotides, which are then degraded further into small acid-soluble oligonucleotides. In Salmonella dublin (strain CT_02021853), this protein is Exodeoxyribonuclease 7 large subunit.